A 1871-amino-acid polypeptide reads, in one-letter code: Girdin (1871 aa).

One can recognise a Calponin-homology (CH) domain in the interval 12 to 132 (QFMTSPLVTW…KLLLLLLGCA (121 aa)). The stretch at 196–425 (HLKRLIDERD…EMAQKQSMDE (230 aa)) forms a coiled coil. S233, S237, and S449 each carry phosphoserine. A coiled-coil region spans residues 458-1385 (TSSRLLKLEM…KIMDQYKFYD (928 aa)). 2 disordered regions span residues 816–842 (ENKS…KRLR) and 1010–1035 (RQDE…RESQ). S1020 carries the post-translational modification Phosphoserine. Over residues 1026–1035 (EDNKWERESQ) the composition is skewed to basic and acidic residues. S1387 is modified (phosphoserine). Positions 1390–1408 (RRRGNWITLKMRKLIKSKK) are phosphoinositide-binding. Positions 1407–1416 (KKDINRERQK) are enriched in basic and acidic residues. Disordered stretches follow at residues 1407–1459 (KKDI…LGTK) and 1559–1601 (TTSF…SNNN). S1417 is modified (phosphoserine; by PKB/AKT1). Polar residues-rich tracts occupy residues 1417–1430 (SLTL…SSEG), 1445–1459 (VGSN…LGTK), and 1559–1578 (TTSF…STGS). T1421 carries the post-translational modification Phosphothreonine. The short motif at 1672–1702 (KTGSPGSEVVTLQQFLEESNKLTSVQIKSSS) is the GBA element. At T1673 the chain carries Phosphothreonine. Position 1675 is a phosphoserine (S1675). Phosphoserine; by PKC/PRKCQ is present on S1690. The segment at 1713-1823 (SLSVSSDFLG…GTTRRTSIHD (111 aa)) is SH2-like; required for interaction with growth factor receptors. S1717 bears the Phosphoserine mark. The interval 1736 to 1871 (SGKTPGDFYD…KSRSREQQSS (136 aa)) is disordered. Positions 1743-1763 (FYDRRTTKPEFLRPGPRKTED) are enriched in basic and acidic residues. Y1765 and Y1799 each carry phosphotyrosine. Polar residues-rich tracts occupy residues 1787–1799 (SSLS…SNPY) and 1807–1818 (SVISTAEGTTRR). Phosphoserine is present on residues S1820 and S1837. Residues 1820-1830 (SIHDFLTKDSR) show a composition bias toward basic and acidic residues. Positions 1838–1851 (PPAAADSNTTAASN) are enriched in low complexity. The span at 1854 to 1871 (KVQESRNSKSRSREQQSS) shows a compositional bias: basic and acidic residues.

It belongs to the CCDC88 family. In terms of assembly, homodimer. Interacts (via GBA motif) with guanine nucleotide-binding protein G(i) alpha subunits GNAI1, GNAI2 and GNAI3. Also interacts (via GNA motif) with guanine nucleotide-binding protein G(s) alpha subunit GNAS. Interaction with G(i) alpha subunits occurs before interaction with GNAS and is regulated by phosphorylation; phosphorylation at Ser-1675 enhances binding to G(i) alpha subunits while phosphorylation at Ser-1690 abolishes G(i) alpha subunit binding, promoting binding to GNAS. Interacts (via C-terminal SH2-like region) with growth factor receptors EGFR, INSR and KDR/VEGFR2 (via their autophosphorylated cytoplasmic tails). Forms a complex with EGFR and GNAI3 which leads to enhanced EGFR signaling and triggering of cell migration; ligand stimulation is required for recruitment of GNAI3 to the complex. Interacts (tyrosine-phosphorylated form) with phosphatidylinositol 3-kinase (PI3K) regulatory subunit PIK3R1/p85a (via SH2 domains); the interaction enables recruitment of PIK3R1 to the EGFR receptor, enhancing PI3K activity and cell migration. Interacts with serine/threonine-protein kinase PRKCQ; the interaction leads to phosphorylation of CCDC88A and inhibition of its guanine nucleotide exchange factor activity. Interacts (via C-terminus) with DISC1; the interaction is direct. Interacts with AKT proteins; the interaction is inhibited in the presence of DISC1. Interacts with AKT1/PKB (via C-terminus). The non-phosphorylated form interacts with phosphatidylinositol 4-phosphate [PI(4)P] and weakly with phosphatidylinositol 3-phosphate [PI(3)P]. Interacts with microtubules. Interacts with actin. Phosphorylation is induced by epidermal growth factor (EGF) in a phosphoinositide 3-kinase (PI3K)-dependent manner. Phosphorylation by AKT1/PKB is necessary for delocalization from the cell membrane and for cell migration. Phosphorylated on tyrosine residues which promotes binding to phosphatidylinositol 3-kinase (PI3K) regulatory subunit PIK3R1/p85a and enhances PI3K activity. Tyrosine-phosphorylated by both receptor and non-receptor tyrosine kinases in vitro. Tyrosine phosphorylation is required for AKT1-dependent phosphorylation of Ser-1417. Phosphorylation at Ser-1690 by PRKCQ disrupts interaction with GNAI3 and inhibits guanine nucleotide exchange factor activity. In terms of tissue distribution, expressed ubiquitously.

The protein localises to the cell membrane. It localises to the cytoplasm. The protein resides in the cytosol. It is found in the cytoplasmic vesicle. Its subcellular location is the cell projection. The protein localises to the lamellipodium. It localises to the cytoskeleton. The protein resides in the cilium basal body. It is found in the microtubule organizing center. Its subcellular location is the centrosome. The protein localises to the centriole. Its function is as follows. Bifunctional modulator of guanine nucleotide-binding proteins (G proteins). Acts as a non-receptor guanine nucleotide exchange factor which binds to and activates guanine nucleotide-binding protein G(i) alpha subunits. Also acts as a guanine nucleotide dissociation inhibitor for guanine nucleotide-binding protein G(s) subunit alpha GNAS. Essential for cell migration. Interacts in complex with G(i) alpha subunits with the EGFR receptor, retaining EGFR at the cell membrane following ligand stimulation and promoting EGFR signaling which triggers cell migration. Binding to Gi-alpha subunits displaces the beta and gamma subunits from the heterotrimeric G-protein complex which enhances phosphoinositide 3-kinase (PI3K)-dependent phosphorylation and kinase activity of AKT1/PKB. Phosphorylation of AKT1/PKB induces the phosphorylation of downstream effectors GSK3 and FOXO1/FKHR, and regulates DNA replication and cell proliferation. Binds in its tyrosine-phosphorylated form to the phosphatidylinositol 3-kinase (PI3K) regulatory subunit PIK3R1 which enables recruitment of PIK3R1 to the EGFR receptor, enhancing PI3K activity and cell migration. Plays a role as a key modulator of the AKT-mTOR signaling pathway, controlling the tempo of the process of newborn neuron integration during adult neurogenesis, including correct neuron positioning, dendritic development and synapse formation. Inhibition of G(s) subunit alpha GNAS leads to reduced cellular levels of cAMP and suppression of cell proliferation. Essential for the integrity of the actin cytoskeleton. Required for formation of actin stress fibers and lamellipodia. May be involved in membrane sorting in the early endosome. Plays a role in ciliogenesis and cilium morphology and positioning and this may partly be through regulation of the localization of scaffolding protein CROCC/Rootletin. In Homo sapiens (Human), this protein is Girdin (CCDC88A).